We begin with the raw amino-acid sequence, 110 residues long: MFGGKGGLGGLMKQAQQMQEKMQKAQEEIAQLEVTGESGAGLVKVTINGAHNCRRVEIDPSLLEDDKDMLEDLVAAAFNDAARRIDETQKEKMASVSSGMQLPPGFKMPF.

It belongs to the YbaB/EbfC family. In terms of assembly, homodimer.

The protein localises to the cytoplasm. It is found in the nucleoid. Functionally, binds to DNA and alters its conformation. May be involved in regulation of gene expression, nucleoid organization and DNA protection. The sequence is that of Nucleoid-associated protein Ent638_0951 from Enterobacter sp. (strain 638).